We begin with the raw amino-acid sequence, 234 residues long: LRP chaperone MESD (234 aa).

A signal peptide spans methionine 1–alanine 33. A chaperone domain region spans residues methionine 1–glycine 164. 2 disordered regions span residues serine 31–lysine 95 and glycine 187–leucine 234. Basic and acidic residues predominate over residues aspartate 54–tryptophan 70. A compositionally biased stretch (acidic residues) spans glutamate 71–aspartate 80. The escort domain stretch occupies residues serine 165–lysine 204. The span at glycine 196–leucine 234 shows a compositional bias: basic and acidic residues. An N-linked (GlcNAc...) asparagine glycan is attached at asparagine 201. The Prevents secretion from ER motif lies at arginine 231 to leucine 234.

Belongs to the MESD family. Monomer. Interacts with LRP5; the interaction prevents LRP5 from forming aggregates and chaperones LRP6 to the plasma membrane. Interacts with LRP6; the interaction prevents LRP6 from forming aggregates and chaperones LRP6 to the plasma membrane. Interacts with LRP4; the interaction promotes glycosylation of LRP4 and its cell-surface expression.

Its subcellular location is the endoplasmic reticulum. Chaperone specifically assisting the folding of beta-propeller/EGF modules within the family of low-density lipoprotein receptors (LDLRs). Acts as a modulator of the Wnt pathway through chaperoning the coreceptors of the canonical Wnt pathway, LRP5 and LRP6, to the plasma membrane. Essential for specification of embryonic polarity and mesoderm induction. Plays an essential role in neuromuscular junction (NMJ) formation by promoting cell-surface expression of LRP4. May regulate phagocytosis of apoptotic retinal pigment epithelium (RPE) cells. The chain is LRP chaperone MESD from Homo sapiens (Human).